The primary structure comprises 326 residues: Eukaryotic translation initiation factor 3 subunit I (326 aa).

WD repeat units follow at residues 8–47 (GHER…RLGT), 50–89 (GHQG…VIAS), 145–184 (MTES…KVVD), 188–227 (DHSA…CLKT), and 285–326 (GHFG…NIFE).

The protein belongs to the eIF-3 subunit I family. In terms of assembly, component of the eukaryotic translation initiation factor 3 (eIF-3) complex. The eIF-3 complex interacts with pix.

The protein localises to the cytoplasm. In terms of biological role, component of the eukaryotic translation initiation factor 3 (eIF-3) complex, which is involved in protein synthesis of a specialized repertoire of mRNAs and, together with other initiation factors, stimulates binding of mRNA and methionyl-tRNAi to the 40S ribosome. The eIF-3 complex specifically targets and initiates translation of a subset of mRNAs involved in cell proliferation. This is Eukaryotic translation initiation factor 3 subunit I from Drosophila sechellia (Fruit fly).